We begin with the raw amino-acid sequence, 341 residues long: Aspartate carbamoyltransferase catalytic subunit (341 aa).

Arg-74 and Thr-75 together coordinate carbamoyl phosphate. Lys-102 contacts L-aspartate. Arg-124, His-152, and Gln-155 together coordinate carbamoyl phosphate. Arg-190 and Arg-244 together coordinate L-aspartate. Gly-285 and Pro-286 together coordinate carbamoyl phosphate.

This sequence belongs to the aspartate/ornithine carbamoyltransferase superfamily. ATCase family. As to quaternary structure, heterododecamer (2C3:3R2) of six catalytic PyrB chains organized as two trimers (C3), and six regulatory PyrI chains organized as three dimers (R2).

It catalyses the reaction carbamoyl phosphate + L-aspartate = N-carbamoyl-L-aspartate + phosphate + H(+). Its pathway is pyrimidine metabolism; UMP biosynthesis via de novo pathway; (S)-dihydroorotate from bicarbonate: step 2/3. Its function is as follows. Catalyzes the condensation of carbamoyl phosphate and aspartate to form carbamoyl aspartate and inorganic phosphate, the committed step in the de novo pyrimidine nucleotide biosynthesis pathway. This Novosphingobium aromaticivorans (strain ATCC 700278 / DSM 12444 / CCUG 56034 / CIP 105152 / NBRC 16084 / F199) protein is Aspartate carbamoyltransferase catalytic subunit.